Here is a 421-residue protein sequence, read N- to C-terminus: Zinc metalloproteinase-disintegrin-like crotastatin (421 aa).

The 197-residue stretch at 10 to 206 folds into the Peptidase M12B domain; the sequence is KYVKLFLVAD…NMPQCILKKP (197 aa). N29 carries N-linked (GlcNAc...) asparagine glycosylation. Disulfide bonds link C121-C201, C161-C185, and C163-C168. H146 is a Zn(2+) binding site. E147 is a catalytic residue. Zn(2+)-binding residues include H150 and H156. Residues 214-299 form the Disintegrin domain; sequence PAVCGNYFVE…TECTDRFQRN (86 aa). Residues V216, N219, F221, E223, E226, and D229 each contribute to the Ca(2+) site. Cystine bridges form between C217/C246, C228/C241, C230/C236, C240/C263, C254/C260, C259/C285, C272/C292, C279/C310, C303/C315, C322/C372, C337/C383, C350/C360, C367/C409, and C403/C414. A D/ECD-tripeptide motif is present at residues 278–280; that stretch reads ECD. The Ca(2+) site is built by D280, M281, D283, D294, and R295.

The protein belongs to the venom metalloproteinase (M12B) family. P-III subfamily. P-IIIc sub-subfamily. Homodimer; disulfide-linked. Zn(2+) is required as a cofactor. Expressed by the venom gland.

The protein localises to the secreted. In terms of biological role, snake venom zinc metalloprotease that induces apoptosis in vascular endothelial cells (VEC), without degrading the extracellular matrix (it cannot cleave collagen) or inhibiting adhesion of VEC. Has also fibrinogenolytic and hemorrhagic activities. The protein is Zinc metalloproteinase-disintegrin-like crotastatin of Crotalus durissus terrificus (South American rattlesnake).